Here is a 256-residue protein sequence, read N- to C-terminus: Small ribosomal subunit protein eS1 (256 aa).

Positions 1–18 (MAVGKNKRLSKGKKGLKK) are enriched in basic residues. The disordered stretch occupies residues 1 to 20 (MAVGKNKRLSKGKKGLKKKA). A2 carries the N-acetylalanine; partial modification.

This sequence belongs to the eukaryotic ribosomal protein eS1 family. As to quaternary structure, component of the small ribosomal subunit. Mature ribosomes consist of a small (40S) and a large (60S) subunit. The 40S subunit contains about 33 different proteins and 1 molecule of RNA (18S). The 60S subunit contains about 49 different proteins and 3 molecules of RNA (25S, 5.8S and 5S).

It localises to the cytoplasm. The protein is Small ribosomal subunit protein eS1 of Chaetomium globosum (strain ATCC 6205 / CBS 148.51 / DSM 1962 / NBRC 6347 / NRRL 1970) (Soil fungus).